Here is a 197-residue protein sequence, read N- to C-terminus: Imidazoleglycerol-phosphate dehydratase (197 aa).

Belongs to the imidazoleglycerol-phosphate dehydratase family.

It localises to the cytoplasm. It carries out the reaction D-erythro-1-(imidazol-4-yl)glycerol 3-phosphate = 3-(imidazol-4-yl)-2-oxopropyl phosphate + H2O. The protein operates within amino-acid biosynthesis; L-histidine biosynthesis; L-histidine from 5-phospho-alpha-D-ribose 1-diphosphate: step 6/9. The chain is Imidazoleglycerol-phosphate dehydratase from Rhodopseudomonas palustris (strain BisA53).